The primary structure comprises 101 residues: RNA-binding protein Hfq (101 aa).

The Sm domain maps to 9–68; sequence DPFLNALRRERVPVSIYLVNGIKLQGQVESFDQFVILLKNTVSQMVYKHAISTVVPSPPV. Residues 62–101 form a disordered region; it reads VVPSPPVSHHSNTPSGSTNNYHGSNPSAPQQPQQDSDDAE. Polar residues predominate over residues 70-86; it reads HHSNTPSGSTNNYHGSN.

It belongs to the Hfq family. As to quaternary structure, homohexamer.

In terms of biological role, RNA chaperone that binds small regulatory RNA (sRNAs) and mRNAs to facilitate mRNA translational regulation in response to envelope stress, environmental stress and changes in metabolite concentrations. Also binds with high specificity to tRNAs. This Yersinia pestis (strain Pestoides F) protein is RNA-binding protein Hfq.